A 335-amino-acid polypeptide reads, in one-letter code: [Citrate [pro-3S]-lyase] ligase (335 aa).

In terms of domain architecture, N-acetyltransferase spans 1–131 (MQFERISTEQ…SATRLQKQCS (131 aa)).

It catalyses the reaction holo-[citrate lyase ACP] + acetate + ATP = acetyl-[citrate lyase ACP] + AMP + diphosphate. Acetylation of prosthetic group (2-(5''-phosphoribosyl)-3'-dephosphocoenzyme-A) of the gamma subunit of citrate lyase. In Haemophilus influenzae (strain ATCC 51907 / DSM 11121 / KW20 / Rd), this protein is [Citrate [pro-3S]-lyase] ligase (citC).